The primary structure comprises 27 residues: Nucleoside diphosphate kinase 2 (27 aa).

K3 serves as a coordination point for ATP.

It belongs to the NDK family. It depends on Mg(2+) as a cofactor.

The enzyme catalyses a 2'-deoxyribonucleoside 5'-diphosphate + ATP = a 2'-deoxyribonucleoside 5'-triphosphate + ADP. The catalysed reaction is a ribonucleoside 5'-diphosphate + ATP = a ribonucleoside 5'-triphosphate + ADP. Major role in the synthesis of nucleoside triphosphates other than ATP. The ATP gamma phosphate is transferred to the NDP beta phosphate via a ping-pong mechanism, using a phosphorylated active-site intermediate. The sequence is that of Nucleoside diphosphate kinase 2 from Pseudotsuga menziesii (Douglas-fir).